A 94-amino-acid polypeptide reads, in one-letter code: Co-chaperonin GroES (94 aa).

It belongs to the GroES chaperonin family. In terms of assembly, heptamer of 7 subunits arranged in a ring. Interacts with the chaperonin GroEL.

Its subcellular location is the cytoplasm. Functionally, together with the chaperonin GroEL, plays an essential role in assisting protein folding. The GroEL-GroES system forms a nano-cage that allows encapsulation of the non-native substrate proteins and provides a physical environment optimized to promote and accelerate protein folding. GroES binds to the apical surface of the GroEL ring, thereby capping the opening of the GroEL channel. This is Co-chaperonin GroES from Alkaliphilus oremlandii (strain OhILAs) (Clostridium oremlandii (strain OhILAs)).